The following is a 398-amino-acid chain: Protein CDKN2AIP homolog A (398 aa).

The 106-residue stretch at 19–124 (LELVHGECES…KVKKRGISSS (106 aa)) folds into the XRN2-binding (XTBD) domain. The segment at 118-245 (KRGISSSNEG…SDNALKPTRR (128 aa)) is disordered. The span at 131–147 (EPCKKQKSSDHGERESS) shows a compositional bias: basic and acidic residues. Polar residues-rich tracts occupy residues 154–163 (SDGNVPSTSL), 189–199 (RRSLPVSNAKS), and 226–238 (QTSM…SSDN).

Belongs to the CARF family.

It localises to the nucleus. It is found in the nucleoplasm. Its function is as follows. May regulate DNA damage response and cell proliferation. The chain is Protein CDKN2AIP homolog A (cdkn2aip-a) from Xenopus laevis (African clawed frog).